A 444-amino-acid polypeptide reads, in one-letter code: Adenylosuccinate synthetase (444 aa).

Residues 19–25 and 47–49 each bind GTP; these read GDEGKGK and GHT. The Proton acceptor role is filled by Asp20. 2 residues coordinate Mg(2+): Asp20 and Gly47. IMP-binding positions include 20 to 23, 45 to 48, Thr139, Arg153, Gln234, Thr249, and Arg317; these read DEGK and NAGH. Residue His48 is the Proton donor of the active site. Residue 313 to 319 coordinates substrate; the sequence is TVTGRPR. GTP-binding positions include Arg319, 345-347, and 427-429; these read KLD and STG.

It belongs to the adenylosuccinate synthetase family. As to quaternary structure, homodimer. Requires Mg(2+) as cofactor.

It localises to the cytoplasm. The enzyme catalyses IMP + L-aspartate + GTP = N(6)-(1,2-dicarboxyethyl)-AMP + GDP + phosphate + 2 H(+). The protein operates within purine metabolism; AMP biosynthesis via de novo pathway; AMP from IMP: step 1/2. In terms of biological role, plays an important role in the de novo pathway of purine nucleotide biosynthesis. Catalyzes the first committed step in the biosynthesis of AMP from IMP. The protein is Adenylosuccinate synthetase of Methylibium petroleiphilum (strain ATCC BAA-1232 / LMG 22953 / PM1).